We begin with the raw amino-acid sequence, 248 residues long: Putative TrmH family tRNA/rRNA methyltransferase (248 aa).

Residues glycine 196, isoleucine 216, and leucine 225 each coordinate S-adenosyl-L-methionine.

This sequence belongs to the class IV-like SAM-binding methyltransferase superfamily. RNA methyltransferase TrmH family.

The protein is Putative TrmH family tRNA/rRNA methyltransferase of Staphylococcus aureus (strain COL).